The primary structure comprises 164 residues: T-cell surface glycoprotein CD3 zeta chain (164 aa).

The signal sequence occupies residues 1 to 21 (MKWKALFTAAILQAQLPITEA). At 22-30 (QSFGLLDPK) the chain is on the extracellular side. Residues 31-51 (LCYLLDGILFIYGVILTALFL) form a helical membrane-spanning segment. Over 52–164 (RVKFSRSADA…ALHMQALPPR (113 aa)) the chain is Cytoplasmic. Serine 58 carries the post-translational modification Phosphoserine. 3 ITAM domains span residues 61–89 (APAYQQGQNQLYNELNLGRREEYDVLDKR), 100–128 (PQRRKNPQEGLYNELQKDKMAEAYSEIGM), and 131–159 (ERRRGKGHDGLYQGLSTATKDTYDALHMQ). 7 positions are modified to phosphotyrosine: tyrosine 64, tyrosine 72, tyrosine 83, tyrosine 111, tyrosine 123, tyrosine 142, and tyrosine 153. Positions 83–96 (YDVLDKRRGRDPEM) are enriched in basic and acidic residues. Residues 83-111 (YDVLDKRRGRDPEMGGKPQRRKNPQEGLY) form a disordered region. The disordered stretch occupies residues 128–154 (MKGERRRGKGHDGLYQGLSTATKDTYD).

It belongs to the CD3Z/FCER1G family. The TCR-CD3 complex is composed of a CD3D/CD3E and a CD3G/CD3E heterodimers that preferentially associate with TCRalpha and TCRbeta, respectively, to form TCRalpha/CD3E/CD3G and TCRbeta/CD3G/CD3E trimers. In turn, the hexamer interacts with CD3Z homodimer to form the TCR-CD3 complex. Alternatively, TCRalpha and TCRbeta can be replaced by TCRgamma and TCRdelta. Interacts with SLA. Interacts with TRAT1. Interacts with DOCK2. Interacts with SLA2. Interacts with SHB. Interacts with ZAP70. Interacts (tyrosine phosphorylated) with SHC1 (via SH2 domain). Interacts with PTPRC. Interacts with CRK; this interaction regulates CD3Z phosphorylation. Interacts (on T cell side) with CD81, ICAM1 and CD9 at immunological synapses between antigen-presenting cells and T cells. Interacts with CD160. Interacts with LY6E. The signaling subunit of immunoglobulin gamma (IgG) Fc receptor complex. As a homodimer or a heterodimer with FCER1G, associates with the ligand binding subunit FCGR3A (via transmembrane domain); this interaction is a prerequisite for Fc receptor complex expression on the cell surface. Interacts with CD5. As to quaternary structure, (Microbial infection) Interacts with HIV-1 Nef; this interaction up-regulates the expression of the Fas ligand (FASLG) at the cell surface. In terms of assembly, (Microbial infection) Interacts with HIV-2 Nef protein; this interaction induces down-regulation of cell surface TCR/CD3 complexes. In terms of processing, phosphorylated on Tyr residues after T-cell receptor triggering by LCK in association with CD4/CD8. As to expression, CD3Z is expressed in normal lymphoid tissue and in peripheral blood mononuclear cells (PBMCs).

Its subcellular location is the cell membrane. Functionally, part of the TCR-CD3 complex present on T-lymphocyte cell surface that plays an essential role in adaptive immune response. When antigen presenting cells (APCs) activate T-cell receptor (TCR), TCR-mediated signals are transmitted across the cell membrane by the CD3 chains CD3D, CD3E, CD3G and CD3Z. All CD3 chains contain immunoreceptor tyrosine-based activation motifs (ITAMs) in their cytoplasmic domain. Upon TCR engagement, these motifs become phosphorylated by Src family protein tyrosine kinases LCK and FYN, resulting in the activation of downstream signaling pathways. CD3Z ITAMs phosphorylation creates multiple docking sites for the protein kinase ZAP70 leading to ZAP70 phosphorylation and its conversion into a catalytically active enzyme. Plays an important role in intrathymic T-cell differentiation. Additionally, participates in the activity-dependent synapse formation of retinal ganglion cells (RGCs) in both the retina and dorsal lateral geniculate nucleus (dLGN). The sequence is that of T-cell surface glycoprotein CD3 zeta chain (CD247) from Homo sapiens (Human).